The following is a 692-amino-acid chain: MQPDLFSTASQADANATPEEPDASNPAARAAWLRDELNRHNYSYHVLDNPSIPDAEYDKLFRELQALETSHPELLVFDSPTQRVGALALSAFPQVTHSVPMLSLGNGFEDEDIIAFDKRVSDGLNSTEIEYATELKFDGLAINLRYEDGILVEAATRGDGATGENVTTNIRTVRAIPLRLHTATPPKVLDVRGEVMMYKADLAKLNARQRDAGGKEFANPRNAAAGSLRQLDSRITAQRTLRFFAYGIGMLEGAEMPPSHSALLDWYAELGLPVCAERAVVKGAAGLLEFYKAVGQKRPTLPYEIDGVVYKVNRVEQQQQLGFVSRAPRYAIAHKFPAEEALTTVQGIEVQVGRTGAITPVARLAPVLVGGVTVTNATLHNEDEVRRKDIQIGDTVIVRRAGDVIPEVVAYVPEKRPVDAQPFVMPTNCPVCNSPIVKLEDEAIARCSGGWVKCAAQRKGGLLHFVSRRAMDVEGLGDQLVEQLVDKHIITTAADLYKLGFRALAELDRMADKSAQNVMAALEKSKSTTLARFIYALGIRHVGEATAKELARHFGNLEALLQASEEQLLEVADIGPVVAQSIRSFLSDPLNMELIEQLQAAGVRWPEHVVENKPKPFAGKTFVLTGTLPTLSRDQAAEKIEAAGGKVAGSVSKKTSYVVAGADAGSKLAKAEELGITILDESALLQLLDTHE.

Over residues 1-14 the composition is skewed to polar residues; the sequence is MQPDLFSTASQADA. Residues 1 to 27 are disordered; sequence MQPDLFSTASQADANATPEEPDASNPA. NAD(+) contacts are provided by residues 54-58, 103-104, and E134; these read DAEYD and SL. Residue K136 is the N6-AMP-lysine intermediate of the active site. Positions 157, 194, 311, and 335 each coordinate NAD(+). Zn(2+)-binding residues include C429, C432, C447, and C454. The region spanning 612 to 692 is the BRCT domain; it reads NKPKPFAGKT…ALLQLLDTHE (81 aa).

It belongs to the NAD-dependent DNA ligase family. LigA subfamily. Mg(2+) serves as cofactor. Requires Mn(2+) as cofactor.

The catalysed reaction is NAD(+) + (deoxyribonucleotide)n-3'-hydroxyl + 5'-phospho-(deoxyribonucleotide)m = (deoxyribonucleotide)n+m + AMP + beta-nicotinamide D-nucleotide.. In terms of biological role, DNA ligase that catalyzes the formation of phosphodiester linkages between 5'-phosphoryl and 3'-hydroxyl groups in double-stranded DNA using NAD as a coenzyme and as the energy source for the reaction. It is essential for DNA replication and repair of damaged DNA. The sequence is that of DNA ligase from Janthinobacterium sp. (strain Marseille) (Minibacterium massiliensis).